A 195-amino-acid chain; its full sequence is Pyridoxal 5'-phosphate synthase subunit PdxT (195 aa).

46–48 (GES) provides a ligand contact to L-glutamine. Catalysis depends on Cys-78, which acts as the Nucleophile. L-glutamine-binding positions include Arg-107 and 136-137 (IR). Residues His-173 and Glu-175 each act as charge relay system in the active site.

It belongs to the glutaminase PdxT/SNO family. In terms of assembly, in the presence of PdxS, forms a dodecamer of heterodimers. Only shows activity in the heterodimer.

It catalyses the reaction aldehydo-D-ribose 5-phosphate + D-glyceraldehyde 3-phosphate + L-glutamine = pyridoxal 5'-phosphate + L-glutamate + phosphate + 3 H2O + H(+). The enzyme catalyses L-glutamine + H2O = L-glutamate + NH4(+). Its pathway is cofactor biosynthesis; pyridoxal 5'-phosphate biosynthesis. Functionally, catalyzes the hydrolysis of glutamine to glutamate and ammonia as part of the biosynthesis of pyridoxal 5'-phosphate. The resulting ammonia molecule is channeled to the active site of PdxS. The chain is Pyridoxal 5'-phosphate synthase subunit PdxT from Dehalococcoides mccartyi (strain ATCC BAA-2100 / JCM 16839 / KCTC 5957 / BAV1).